The chain runs to 239 residues: Apoptosis regulator Bcl-2 (239 aa).

The BH4 signature appears at 10–30; that stretch reads DNREIVMKYIHYKLSQRGYEW. Residues 39-85 form a disordered region; it reads PPGAAPAPGIFSSQPGHTPHPAASRDPVARTSPLQTPAAPGAAAGPA. Thr69 carries the phosphothreonine; by MAPK8 modification. Phosphoserine; by MAPK8 and PKC is present on Ser70. Over residues 75–85 the composition is skewed to low complexity; that stretch reads PAAPGAAAGPA. Residue Ser87 is modified to Phosphoserine; by MAPK8. Positions 92-107 are required for interaction with SEPTIN4 isoform ARTS. Required XIAP-mediated ubiquitination and apoptosis; that stretch reads VVHLTLRQAGDDFSRR. Residues 93–107 carry the BH3 motif; the sequence is VHLTLRQAGDDFSRR. Residues 136-155 carry the BH1 motif; that stretch reads ELFRDGVNWGRIVAFFEFGG. The BH2 signature appears at 187–202; the sequence is TWIQDNGGWDAFVELY. The chain crosses the membrane as a helical span at residues 212–233; the sequence is FSWLSLKTLLSLALVGACITLG.

The protein belongs to the Bcl-2 family. In terms of assembly, forms homodimers, and heterodimers with BAX, BAD, BAK and Bcl-X(L). Heterodimerization with BAX requires intact BH1 and BH2 motifs, and is necessary for anti-apoptotic activity. Part of a complex composed of SEPTIN4 isoform ARTS, XIAP and BCL2, within the complex interacts (via BH3 domain) with SEPTIN4 isoform ARTS and XIAP, SEPTIN4 isoform ARTS acts as a scaffold protein and stabilizes the complex. Component of the complex, at least composed of LRPPRC, BECN1 and BCL2; the interactions prevent BECN1 from forming an autophagy-inducing complex with PIK3C3. Interacts with EI24. Also interacts with APAF1, BBC3, BCL2L1, BNIPL, MRPL41 and TP53BP2. Binding to FKBP8 seems to target BCL2 to the mitochondria and probably interferes with the binding of BCL2 to its targets. Interacts with BAG1 in an ATP-dependent manner. Interacts with RAF1 (the 'Ser-338' and 'Ser-339' phosphorylated form). Interacts (via the BH4 domain) with EGLN3; the interaction prevents the formation of the BAX-BCL2 complex and inhibits the anti-apoptotic activity of BCL2. Interacts with G0S2; this interaction also prevents the formation of the anti-apoptotic BAX-BCL2 complex. Interacts with RTL10/BOP. Interacts with the SCF(FBXO10) complex. Interacts (via the loop between motifs BH4 and BH3) with NLRP1 (via LRR repeats), but not with NLRP2, NLRP3, NLRP4, PYCARD, nor MEFV. Interacts with GIMAP3/IAN4, GIMAP4/IAN1 and GIMAP5/IAN5. Interacts with BCAP31. Interacts with IRF3; the interaction is inhibited by Sendai virus infection. Interacts with BECN1; thereby inhibiting autophagy in non-starvation conditions. Interacts with AMBRA1; thereby inhibiting autophagy. As to quaternary structure, (Microbial infection) Interacts with Toxoplasma gondii ROP17; the interaction probably promotes BCL2 phosphorylation and degradation. Phosphorylation/dephosphorylation on Ser-70 regulates anti-apoptotic activity. Growth factor-stimulated phosphorylation on Ser-70 by PKC is required for the anti-apoptosis activity and occurs during the G2/M phase of the cell cycle. In the absence of growth factors, BCL2 appears to be phosphorylated by other protein kinases such as ERKs and stress-activated kinases. Phosphorylated by MAPK8/JNK1 at Thr-69, Ser-70 and Ser-87, which stimulates starvation-induced autophagy. Dephosphorylated by protein phosphatase 2A (PP2A). Post-translationally, proteolytically cleaved by caspases during apoptosis. The cleaved protein, lacking the BH4 motif, has pro-apoptotic activity, causes the release of cytochrome c into the cytosol promoting further caspase activity. In terms of processing, monoubiquitinated by PRKN, leading to an increase in its stability. Ubiquitinated by SCF(FBXO10), leading to its degradation by the proteasome. Ubiquitinated by XIAP, leading to its degradation by the proteasome. As to expression, expressed in a variety of tissues.

Its subcellular location is the mitochondrion outer membrane. The protein resides in the nucleus membrane. The protein localises to the endoplasmic reticulum membrane. It is found in the cytoplasm. Its function is as follows. Suppresses apoptosis in a variety of cell systems including factor-dependent lymphohematopoietic and neural cells. Regulates cell death by controlling the mitochondrial membrane permeability. Appears to function in a feedback loop system with caspases. Inhibits caspase activity either by preventing the release of cytochrome c from the mitochondria and/or by binding to the apoptosis-activating factor (APAF-1). Also acts as an inhibitor of autophagy: interacts with BECN1 and AMBRA1 during non-starvation conditions and inhibits their autophagy function. May attenuate inflammation by impairing NLRP1-inflammasome activation, hence CASP1 activation and IL1B release. In Homo sapiens (Human), this protein is Apoptosis regulator Bcl-2 (BCL2).